Reading from the N-terminus, the 272-residue chain is Large ribosomal subunit protein uL2 (272 aa).

The tract at residues 247–272 is disordered; sequence PWGQPCKGFKTRNNKRTNSSIIKRRK. Residues 262 to 272 are compositionally biased toward polar residues; the sequence is RTNSSIIKRRK.

The protein belongs to the universal ribosomal protein uL2 family. Part of the 50S ribosomal subunit. Forms a bridge to the 30S subunit in the 70S ribosome.

One of the primary rRNA binding proteins. Required for association of the 30S and 50S subunits to form the 70S ribosome, for tRNA binding and peptide bond formation. It has been suggested to have peptidyltransferase activity; this is somewhat controversial. Makes several contacts with the 16S rRNA in the 70S ribosome. This chain is Large ribosomal subunit protein uL2, found in Bdellovibrio bacteriovorus (strain ATCC 15356 / DSM 50701 / NCIMB 9529 / HD100).